The following is a 1284-amino-acid chain: Zinc finger protein 423 (1284 aa).

2 disordered regions span residues 1–64 and 87–117; these read MHKK…MEDE and AHRC…SPTQ. Positions 34–46 are enriched in basic and acidic residues; it reads CDQKTSRALEDRN. Ser47 and Ser50 each carry phosphoserine. Acidic residues predominate over residues 54–64; sequence RNEDDEDMEDE. A C2H2-type 1; degenerate zinc finger spans residues 67–93; sequence YTCDHCQQDFESLADLTDHRAHRCPGD. The span at 102–117 shows a compositional bias: polar residues; that stretch reads WVASSPSSKDVASPTQ. 7 consecutive C2H2-type zinc fingers follow at residues 138-160, 166-188, 194-216, 222-244, 263-286, 295-318, and 323-345; these read YPCQ…EQIH, FKCT…IKLH, YHCH…LKTH, FKCT…MQAH, FMCD…LTRH, LQCI…HQAH, and HKCP…LDSH. Residues 346 to 398 are disordered; sequence RQPDSSNHSVSPDPVLGSVASMSSATPDSSASVERGSTPDSTLKPLRGQKKMR. Residues 363-377 show a composition bias toward low complexity; that stretch reads SVASMSSATPDSSAS. The segment at 409 to 433 adopts a C2H2-type 9; degenerate zinc-finger fold; that stretch reads YSCPYCSKRDFNSLAVLEIHLKTIH. 3 consecutive C2H2-type zinc fingers follow at residues 441–464, 480–503, and 517–540; these read HTCQ…RKLH, FHCN…RVSH, and FFCN…QQAH. A C2H2-type 13; atypical zinc finger spans residues 563–588; it reads YSCPYCTNSPIFGSILKLTKHIKENH. The segment at 590 to 624 is disordered; sequence NIPLAHSKKSKAEQSPVSSDVEVSSPKRQRLSASA. The residue at position 604 (Ser604) is a Phosphoserine. Residues 604 to 615 show a composition bias toward low complexity; the sequence is SPVSSDVEVSSP. 7 consecutive C2H2-type zinc fingers follow at residues 632–654, 662–684, 692–715, 720–743, 750–773, 781–803, and 807–830; these read YPCN…LKLH, QACP…LTVH, YVCE…LDMH, YHCT…AVKH, YRCT…KHSH, HKCI…ITTH, and YNCK…REKH. The segment at 886–908 adopts a C2H2-type 21; degenerate zinc-finger fold; it reads YGCDICGAAYTMEVLLQNHRLRD. 3 C2H2-type zinc fingers span residues 930 to 952, 959 to 981, and 1020 to 1042; these read HKCN…LQTH, YMCP…KVTH, and FRCV…GTFH. Position 1054 is a phosphoserine (Ser1054). The C2H2-type 25; degenerate zinc finger occupies 1064–1082; sequence YKCALCLKEFRSKQDLVKL. C2H2-type zinc fingers lie at residues 1120 to 1143, 1168 to 1190, 1198 to 1220, 1229 to 1252, and 1259 to 1282; these read LRCP…QVDH, YQCI…VANH, HECK…LIEH, FKCP…FAVH, and YDCS…MSQH. Residues 1136–1147 show a composition bias toward basic and acidic residues; it reads ESHMQVDHRDLT. Residues 1136–1163 are disordered; that stretch reads ESHMQVDHRDLTPETSGPRKGTQTSPVP.

This sequence belongs to the krueppel C2H2-type zinc-finger protein family. As to quaternary structure, homodimer. Interacts with EBF1. Interacts with SMAD1 and SMAD4. Interacts with PARP1. Interacts with CEP290. In terms of tissue distribution, expressed in brain, lung, skeletal muscle, heart, pancreas and kidney but not liver or placenta. Also expressed in aorta, ovary, pituitary, small intestine, fetal brain, fetal kidney and, within the adult brain, in the substantia nigra, medulla, amygdala, thalamus and cerebellum.

Its subcellular location is the nucleus. Its function is as follows. Transcription factor that can both act as an activator or a repressor depending on the context. Plays a central role in BMP signaling and olfactory neurogenesis. Associates with SMADs in response to BMP2 leading to activate transcription of BMP target genes. Acts as a transcriptional repressor via its interaction with EBF1, a transcription factor involved in terminal olfactory receptor neurons differentiation; this interaction preventing EBF1 to bind DNA and activate olfactory-specific genes. Involved in olfactory neurogenesis by participating in a developmental switch that regulates the transition from differentiation to maturation in olfactory receptor neurons. Controls proliferation and differentiation of neural precursors in cerebellar vermis formation. This is Zinc finger protein 423 (ZNF423) from Homo sapiens (Human).